The primary structure comprises 165 residues: Histone H1-like protein HC2 (165 aa).

Composition is skewed to basic residues over residues 1 to 50 (MLGV…KTVA) and 59 to 80 (PVAK…KKTV). Residues 1-80 (MLGVQKKRST…VRKVAAKKTV (80 aa)) form a disordered region.

This sequence belongs to the histone H1/H5 family. HCT subfamily.

In terms of biological role, might have a role in establishing the nucleoid structure of elementary bodies. This Chlamydia trachomatis protein is Histone H1-like protein HC2 (hctB).